Here is a 288-residue protein sequence, read N- to C-terminus: MAVGKEILTKIRSVQNTQKITRAMQMVSTSKMRKTQERMRAARPYAEKVRTVMAHLAQANAELGHPLLARRETIKRAGIILVSSDKGLCGGLNVNSFKRFFGKVKELQDQGIEVDVCCLGQKGLAAAQRARLNVVASAVHLGDMPKMEKLIGPLTVLFRQYAEGELDAVYIVYSSFVNTMKQEPALEQLLPLTPHHMVVEHSHSWDYLYEPDAPTLMEFLVRRYLESVVYQALAENMASEQAARMVAMKAATDNAGNTIKQLRLVYNKARQAAITTELSEIVAGAAAV.

Belongs to the ATPase gamma chain family. In terms of assembly, F-type ATPases have 2 components, CF(1) - the catalytic core - and CF(0) - the membrane proton channel. CF(1) has five subunits: alpha(3), beta(3), gamma(1), delta(1), epsilon(1). CF(0) has three main subunits: a, b and c.

The protein localises to the cell inner membrane. Its function is as follows. Produces ATP from ADP in the presence of a proton gradient across the membrane. The gamma chain is believed to be important in regulating ATPase activity and the flow of protons through the CF(0) complex. The chain is ATP synthase gamma chain from Chromobacterium violaceum (strain ATCC 12472 / DSM 30191 / JCM 1249 / CCUG 213 / NBRC 12614 / NCIMB 9131 / NCTC 9757 / MK).